The primary structure comprises 444 residues: Protein EVI2B (444 aa).

The N-terminal stretch at 1–23 (MEFKYLVFIVLCQYLDNTFFSET) is a signal peptide. Topologically, residues 24–203 (EAITTEQQSL…GTAHKNNHNA (180 aa)) are extracellular. Asn-63, Asn-94, Asn-104, and Asn-127 each carry an N-linked (GlcNAc...) asparagine glycan. 2 stretches are compositionally biased toward polar residues: residues 104–131 (NNSLPQTSPSGFTLTNQPSPSTYNSTGQ) and 160–171 (THNQPTKSTPTI). Residues 104–197 (NNSLPQTSPS…EPPSGKGTAH (94 aa)) are disordered. Pro residues predominate over residues 177-187 (TPPPPPPPLTS). A helical transmembrane segment spans residues 204-224 (IAAILIGTIIISMLVAILMII). Residues 225–444 (LWKYLRKPVL…SLPPPPTELL (220 aa)) are Cytoplasmic-facing. Phosphothreonine is present on Thr-250. Residues Ser-269, Ser-272, Ser-279, and Ser-295 each carry the phosphoserine modification. 2 stretches are compositionally biased toward polar residues: residues 318–332 (SEDSADGSTVGTAVS) and 361–370 (SPLPNDSINP). 2 disordered regions span residues 318 to 337 (SEDSADGSTVGTAVSSDDAD) and 361 to 444 (SPLP…TELL).

Expressed in myeloid and lymphoid progenitors and increased in mature hematopoietic populations with the highest levels in granulocytes.

Its subcellular location is the membrane. Its function is as follows. Required for granulocyte differentiation and functionality of hematopoietic progenitor cells through the control of cell cycle progression and survival of hematopoietic progenitor cells. The chain is Protein EVI2B from Mus musculus (Mouse).